Here is an 81-residue protein sequence, read N- to C-terminus: Acyl carrier protein (81 aa).

The 79-residue stretch at 2–80 (ASKDEILAGL…DAVNFIDNAQ (79 aa)) folds into the Carrier domain. Position 40 is an O-(pantetheine 4'-phosphoryl)serine (Ser-40).

It belongs to the acyl carrier protein (ACP) family. 4'-phosphopantetheine is transferred from CoA to a specific serine of apo-ACP by AcpS. This modification is essential for activity because fatty acids are bound in thioester linkage to the sulfhydryl of the prosthetic group.

It is found in the cytoplasm. It participates in lipid metabolism; fatty acid biosynthesis. Its function is as follows. Carrier of the growing fatty acid chain in fatty acid biosynthesis. This chain is Acyl carrier protein, found in Kocuria rhizophila (strain ATCC 9341 / DSM 348 / NBRC 103217 / DC2201).